We begin with the raw amino-acid sequence, 354 residues long: Ubiquinol oxidase 1a, mitochondrial (354 aa).

The transit peptide at 1 to 62 (MMITRGGAKA…RAPTIGGMRF (62 aa)) directs the protein to the mitochondrion. Residues 68-99 (LGEKTPMKEEDANQKKTENESTGGDAAGGNNK) are disordered. Positions 72-86 (TPMKEEDANQKKTEN) are enriched in basic and acidic residues. The chain crosses the membrane as a helical span at residues 179–199 (AMMLETVAAVPGMVGGMLLHC). Fe cation contacts are provided by Glu-183, Glu-222, and His-225. A helical transmembrane segment spans residues 241 to 261 (ALVITVQGVFFNAYFLGYLIS). Fe cation is bound by residues Glu-273, Glu-324, and His-327.

It belongs to the alternative oxidase family. Homodimer; disulfide-linked. Fe cation is required as a cofactor. As to expression, expressed in roots, stems, cotyledons, leaves and flowers. High expression in sepals.

The protein resides in the mitochondrion inner membrane. It catalyses the reaction 2 a ubiquinol + O2 = 2 a ubiquinone + 2 H2O. When the two monomeric subunits are covalently linked by a S-S bond, the enzyme is essentially inactive. When the disulfide bond is reduced, its component sulfhydryls can associate with K-keto acids through formation of a thiohemiacetal, resulting in enzyme activation. Activated by glyoxylate, irrespective to the substitution found at Cys-127. That suggests the presence of a second activation site, possibly Cys-177. Its function is as follows. Catalyzes the cyanide-resistant oxidation of ubiquinol and the reduction of molecular oxygen to water, but does not translocate protons and consequently is not linked to oxidative phosphorylation. Increases respiration when the cytochrome respiratory pathway is restricted, or in response to low temperatures. The polypeptide is Ubiquinol oxidase 1a, mitochondrial (AOX1A) (Arabidopsis thaliana (Mouse-ear cress)).